The sequence spans 505 residues: MTTMNISTLRLDSNPITTSTKSTTHRSGALGYNGSYSCRLLQFQKKNKAPSIIVCSTKPLASVVEHQGVNDSGLTRIESLSQVSGVLGCQWGDEGKGKLVDILAKHFDIVARCQGGANAGHTIYNSEGKKFALHLVPSGILNEETICVIGNGVVVHLPGLFKEIDNLESNGVSCQGRILVSDRAHLLFDFHQEVDGLREAELAKSFIGTTKRGIGPCYSSKVIRNGIRVSDLRHMDTFPQQLDLLLSDAASRFQGFNYGRDMLKEEVERYKKFAERLEPFITDTVHFMNDAISQKKKILVEGGQATMLDIDFGTYPFVTSSSPSAGGICTGLGIAPRVVGDLVGVVKAYTTRVGSGPFPTEIMGKGGDLLRFAGQEFGTTTGRPRRCGWLDIVALRFCCQINGFASLNLTKLDVLSDLSEIQLGVTYRHPDGSTLNSFPSDIRLLEQIKVEYEVMPGWQSDISSVRKYSDLPKAAREYVERIEELVGVPVHYIGVGPGRDALIYK.

The N-terminal 60 residues, 1–60 (MTTMNISTLRLDSNPITTSTKSTTHRSGALGYNGSYSCRLLQFQKKNKAPSIIVCSTKPL), are a transit peptide targeting the chloroplast. GTP contacts are provided by residues 92–98 (GDEGKGK) and 120–122 (GHT). The Proton acceptor role is filled by D93. The Mg(2+) site is built by D93 and G120. Residues 93 to 96 (DEGK), 118 to 121 (NAGH), T210, R224, Q304, T319, and R383 contribute to the IMP site. The Proton donor role is filled by H121. 379-385 (TTTGRPR) provides a ligand contact to substrate. Residues R385, 411 to 413 (KLD), and 494 to 496 (GVG) contribute to the GTP site.

The protein belongs to the adenylosuccinate synthetase family. As to quaternary structure, homodimer. Mg(2+) serves as cofactor.

Its subcellular location is the plastid. The protein resides in the chloroplast. It catalyses the reaction IMP + L-aspartate + GTP = N(6)-(1,2-dicarboxyethyl)-AMP + GDP + phosphate + 2 H(+). It participates in purine metabolism; AMP biosynthesis via de novo pathway; AMP from IMP: step 1/2. Functionally, plays an important role in the de novo pathway and in the salvage pathway of purine nucleotide biosynthesis. Catalyzes the first committed step in the biosynthesis of AMP from IMP. This is Adenylosuccinate synthetase, chloroplastic from Nicotiana tabacum (Common tobacco).